The chain runs to 86 residues: Small ribosomal subunit protein bS20 (86 aa).

The disordered stretch occupies residues 1–22 (MANIKSQIKRIRTNERRRLRNQ). Residues 7–20 (QIKRIRTNERRRLR) are compositionally biased toward basic residues.

Belongs to the bacterial ribosomal protein bS20 family.

Binds directly to 16S ribosomal RNA. The sequence is that of Small ribosomal subunit protein bS20 from Mycolicibacterium smegmatis (strain ATCC 700084 / mc(2)155) (Mycobacterium smegmatis).